The following is a 710-amino-acid chain: Amyloid beta precursor protein binding family B member 1 (710 aa).

At Ser135 the chain carries Phosphoserine. Disordered regions lie at residues 143 to 256 (EQGP…SDLP) and 276 to 300 (GTTQWEPPGRASPSQGSSPQEESQL). Positions 145–173 (GPDEGEEKAAGEAEEDDEDEEEEEEEEDL) are enriched in acidic residues. The residue at position 204 (Lys204) is an N6-acetyllysine. Polar residues predominate over residues 223-234 (SWATLSQGSPSY). One can recognise a WW domain in the interval 253–285 (SDLPAGWMRVQDTSGTYYWHIPTGTTQWEPPGR). Over residues 287-299 (SPSQGSSPQEESQ) the composition is skewed to low complexity. The PID 1 domain occupies 370–509 (FAVRSLGWVE…SKIMSERRNA (140 aa)). Ser459 carries the post-translational modification Phosphoserine; by PKC. Ser517 carries the post-translational modification Phosphoserine. The PID 2 domain occupies 542–699 (KFQVYYLGNV…RRGVQSLWGS (158 aa)). At Tyr547 the chain carries Phosphotyrosine; by ABL1. Phosphoserine; by SGK1 is present on Ser610. Residue Lys701 is modified to N6-acetyllysine.

In terms of assembly, component of a complex, at least composed of APBB1, RASD1/DEXRAS1 and APP. Interacts (via PID domain 2) with APP (with the intracellular domain of the amyloid-beta precursor protein). Interacts (via PID domain 2) with RASD1/DEXRAS1; impairs the transcription activation activity. Interacts (via PID domain 1) with KAT5/TIP60. Interacts (via the WW domain) with the proline-rich region of APBB1IP. Interacts with TSHZ1 and TSHZ2. Interacts (via the WW domain) with histone H2AX (when phosphorylated on 'Tyr-142') and the proline-rich region of ENAH. Interacts with MAPK8. Interacts (via PID domain 1) with TSHZ3 (via homeobox domain). Interacts with SET. Found in a trimeric complex with HDAC1 and TSHZ3; the interaction between HDAC1 and APBB1 is mediated by TSHZ3. Interacts (via WWW domain) with NEK6. Interacts (via WWW domain) with ABL1. Interacts with RNF157. Interacts with ARF6. Post-translationally, polyubiquitination by RNF157 leads to degradation by the proteasome. In terms of processing, phosphorylation at Ser-610 by SGK1 promotes its localization to the nucleus. Phosphorylated following nuclear translocation. Phosphorylation at Tyr-546 by ABL1 enhances transcriptional activation activity and reduces the affinity for RASD1/DEXRAS1. Acetylation at Lys-204 and Lys-701 by KAT5 promotes its transcription activator activity. Phosphorylated at Ser-459 by PKC upon insulin activation. As to expression, expressed in the brain, retinal lens and muscle cells (at protein level).

It localises to the cell membrane. The protein resides in the cytoplasm. Its subcellular location is the nucleus. It is found in the cell projection. The protein localises to the growth cone. It localises to the nucleus speckle. Its function is as follows. Transcription coregulator that can have both coactivator and corepressor functions. Adapter protein that forms a transcriptionally active complex with the gamma-secretase-derived amyloid precursor protein (APP) intracellular domain. Plays a central role in the response to DNA damage by translocating to the nucleus and inducing apoptosis. May act by specifically recognizing and binding histone H2AX phosphorylated on 'Tyr-142' (H2AXY142ph) at double-strand breaks (DSBs), recruiting other pro-apoptosis factors such as MAPK8/JNK1. Required for histone H4 acetylation at double-strand breaks (DSBs). Its ability to specifically bind modified histones and chromatin modifying enzymes such as KAT5/TIP60, probably explains its transcription activation activity. Functions in association with TSHZ3, SET and HDAC factors as a transcriptional repressor, that inhibits the expression of CASP4. Associates with chromatin in a region surrounding the CASP4 transcriptional start site(s). Involved in hippocampal neurite branching and neuromuscular junction formation, as a result plays a role in spatial memory functioning. Plays a role in the maintenance of lens transparency. May play a role in muscle cell strength. Acts as a molecular adapter that functions in neurite outgrowth by activating the RAC1-ARF6 axis upon insulin treatment. This is Amyloid beta precursor protein binding family B member 1 from Mus musculus (Mouse).